The chain runs to 369 residues: Histidinol-phosphate aminotransferase 2 (369 aa).

The residue at position 227 (Lys227) is an N6-(pyridoxal phosphate)lysine.

It belongs to the class-II pyridoxal-phosphate-dependent aminotransferase family. Histidinol-phosphate aminotransferase subfamily. Homodimer. Pyridoxal 5'-phosphate is required as a cofactor.

The catalysed reaction is L-histidinol phosphate + 2-oxoglutarate = 3-(imidazol-4-yl)-2-oxopropyl phosphate + L-glutamate. It participates in amino-acid biosynthesis; L-histidine biosynthesis; L-histidine from 5-phospho-alpha-D-ribose 1-diphosphate: step 7/9. The polypeptide is Histidinol-phosphate aminotransferase 2 (hisC2) (Mesorhizobium japonicum (strain LMG 29417 / CECT 9101 / MAFF 303099) (Mesorhizobium loti (strain MAFF 303099))).